The chain runs to 605 residues: NADH-ubiquinone oxidoreductase chain 5 (605 aa).

15 consecutive transmembrane segments (helical) span residues 8–28 (TLLSLLILTVPIMASNFYPYT), 34–54 (IYVKTMVSYAFLVSLIPTMIF), 87–107 (MILMPVALSVTWSIMEFSMWY), 117–137 (FFKYLLLFLITMMLLVTANNL), 140–160 (LFIGWEGVGIMSFLLIGWWYG), 171–191 (AILYNRIGDVGFLVAMAWFLF), 241–261 (TPVSALLHSSTMVVAGIFLLI), 273–293 (IQTMMLCLGAITTLFTAICAL), 301–321 (IVAFSTSSQLGLMMVTVGINQ), 324–344 (LAFLHICTHAFFKAMLFLCSG), 366–386 (LPFTTTALITGSLALTGMPFL), 409–429 (LFITLIATSLTAVYSTRIIYF), 457–477 (LLVGSIFAGFFISNNITPTTI), 482–502 (MPTYLKTTAMLVTLLGFIVAL), and 584–604 (IKLYFLSFLITLTLSLIMLNF).

Belongs to the complex I subunit 5 family. As to quaternary structure, core subunit of respiratory chain NADH dehydrogenase (Complex I) which is composed of 45 different subunits.

Its subcellular location is the mitochondrion inner membrane. The catalysed reaction is a ubiquinone + NADH + 5 H(+)(in) = a ubiquinol + NAD(+) + 4 H(+)(out). Its function is as follows. Core subunit of the mitochondrial membrane respiratory chain NADH dehydrogenase (Complex I) which catalyzes electron transfer from NADH through the respiratory chain, using ubiquinone as an electron acceptor. Essential for the catalytic activity and assembly of complex I. This Rousettus amplexicaudatus (Common rousette) protein is NADH-ubiquinone oxidoreductase chain 5 (MT-ND5).